We begin with the raw amino-acid sequence, 288 residues long: Energy-coupling factor transporter ATP-binding protein EcfA2 (288 aa).

In terms of domain architecture, ABC transporter spans 3-243 (IVFEAVSHIY…RAELEAIGLG (241 aa)). 40-47 (GPTGSGKS) provides a ligand contact to ATP.

The protein belongs to the ABC transporter superfamily. Energy-coupling factor EcfA family. As to quaternary structure, forms a stable energy-coupling factor (ECF) transporter complex composed of 2 membrane-embedded substrate-binding proteins (S component), 2 ATP-binding proteins (A component) and 2 transmembrane proteins (T component).

The protein localises to the cell membrane. Functionally, ATP-binding (A) component of a common energy-coupling factor (ECF) ABC-transporter complex. Unlike classic ABC transporters this ECF transporter provides the energy necessary to transport a number of different substrates. This is Energy-coupling factor transporter ATP-binding protein EcfA2 from Symbiobacterium thermophilum (strain DSM 24528 / JCM 14929 / IAM 14863 / T).